Here is a 2701-residue protein sequence, read N- to C-terminus: Centromere-associated protein E (2701 aa).

A Kinesin motor domain is found at 6 to 329 (AVAVCVRVRP…LQFASTAKYM (324 aa)). 86 to 93 (GQTASGKT) contributes to the ATP binding site. Residues 336 to 2590 (NEVSTDEALL…SNEVKTWKER (2255 aa)) adopt a coiled-coil conformation. 2 positions are modified to phosphoserine: serine 611 and serine 2083. The tract at residues 2126 to 2476 (KEIEFQKELS…IDLEKMKNAK (351 aa)) is kinetochore-binding domain. The segment at 2355-2376 (SGAQVNPTTQDNKNPHVTSRAT) is disordered. Serine 2389 carries the post-translational modification Phosphoserine. Polar residues predominate over residues 2508 to 2527 (QAQDTSVISEHTDPQPSNKP). 2 disordered regions span residues 2508 to 2533 (QAQD…CGGG) and 2588 to 2701 (KERT…CKTQ). The globular autoinhibitory domain stretch occupies residues 2510 to 2698 (QDTSVISEHT…ASSGKDVPEC (189 aa)). A compositionally biased stretch (basic and acidic residues) spans 2588 to 2600 (KERTLKREAHKQV). Over residues 2601-2625 (TCENSPKSPKVTGTASKKKQITPSQ) the composition is skewed to polar residues. Residues 2626–2640 (CKERNLQDPVPKESP) are compositionally biased toward basic and acidic residues. Serine 2639, serine 2647, and serine 2651 each carry phosphoserine. Position 2698 is a cysteine methyl ester (cysteine 2698). A lipid anchor (S-farnesyl cysteine) is attached at cysteine 2698. A propeptide spans 2699–2701 (KTQ) (removed in mature form).

Belongs to the TRAFAC class myosin-kinesin ATPase superfamily. Kinesin family. Monomer. Interacts with CENPF. Interacts with BUB1B. Interacts with SEPT7. Interacts with KIF18A. Interacts with PRC1. Interacts with NUF2; this interaction determines kinetochore localization. Interacts with SKAP; this interaction greatly favors SKAP binding to microtubules. Interacts with TRAPPC12. Interacts with CTCF. Post-translationally, the C-terminal inhibitory domain is phosphorylated. Phosphorylation relieves autoinhibition of the kinetochore motor. In terms of processing, sumoylated with SUMO2 and SUMO3. The sumoylation mediates the association to the kinetochore.

It is found in the chromosome. It localises to the centromere. The protein localises to the kinetochore. Its subcellular location is the cytoplasm. The protein resides in the cytoskeleton. It is found in the spindle. Functionally, microtubule plus-end-directed kinetochore motor which plays an important role in chromosome congression, microtubule-kinetochore conjugation and spindle assembly checkpoint activation. Drives chromosome congression (alignment of chromosomes at the spindle equator resulting in the formation of the metaphase plate) by mediating the lateral sliding of polar chromosomes along spindle microtubules towards the spindle equator and by aiding the establishment and maintenance of connections between kinetochores and spindle microtubules. The transport of pole-proximal chromosomes towards the spindle equator is favored by microtubule tracks that are detyrosinated. Acts as a processive bi-directional tracker of dynamic microtubule tips; after chromosomes have congressed, continues to play an active role at kinetochores, enhancing their links with dynamic microtubule ends. Suppresses chromosome congression in NDC80-depleted cells and contributes positively to congression only when microtubules are stabilized. Plays an important role in the formation of stable attachments between kinetochores and spindle microtubules The stabilization of kinetochore-microtubule attachment also requires CENPE-dependent localization of other proteins to the kinetochore including BUB1B, MAD1 and MAD2. Plays a role in spindle assembly checkpoint activation (SAC) via its interaction with BUB1B resulting in the activation of its kinase activity, which is important for activating SAC. Necessary for the mitotic checkpoint signal at individual kinetochores to prevent aneuploidy due to single chromosome loss. The protein is Centromere-associated protein E (CENPE) of Homo sapiens (Human).